The following is a 372-amino-acid chain: Beta-1,4-galactosyltransferase 2 (372 aa).

The Cytoplasmic segment spans residues 1-15 (MSRLLGGTLERVCKA). Residues 16–36 (VLLLCLLHFLVAVILYFDVYA) form a helical; Signal-anchor for type II membrane protein membrane-spanning segment. At 37–372 (QHLAFFSRFS…GRPPSWPPRG (336 aa)) the chain is on the lumenal side. Residues 56 to 97 (PAASSSSSSSNCSRPNATASSSGLPEVPSALPGPTAPTLPPC) form a disordered region. N66 and N71 each carry an N-linked (GlcNAc...) asparagine glycan. Residues 66-78 (NCSRPNATASSSG) show a composition bias toward polar residues. Cysteines 97 and 139 form a disulfide. Residues 150-154 (PFRHR), 189-191 (FNR), 217-218 (VD), and W278 contribute to the UDP-alpha-D-galactose site. An intrachain disulfide couples C211 to C230. D218 is a binding site for Mn(2+). 280-283 (GEDD) is a binding site for N-acetyl-D-glucosamine. H311 contributes to the Mn(2+) binding site. Residue 311 to 313 (HDR) coordinates UDP-alpha-D-galactose. R323 is a binding site for N-acetyl-D-glucosamine. An N-linked (GlcNAc...) asparagine glycan is attached at N357.

Belongs to the glycosyltransferase 7 family. Mn(2+) is required as a cofactor. As to expression, weakly expressed in various tissues. Highest expression in prostate, testis, ovary, intestine, muscle, and in fetal brain.

It is found in the golgi apparatus. The protein localises to the golgi stack membrane. The enzyme catalyses D-glucose + UDP-alpha-D-galactose = lactose + UDP + H(+). It catalyses the reaction an N-acetyl-beta-D-glucosaminyl derivative + UDP-alpha-D-galactose = a beta-D-galactosyl-(1-&gt;4)-N-acetyl-beta-D-glucosaminyl derivative + UDP + H(+). The catalysed reaction is N-acetyl-D-glucosamine + UDP-alpha-D-galactose = beta-D-galactosyl-(1-&gt;4)-N-acetyl-D-glucosamine + UDP + H(+). Its pathway is protein modification; protein glycosylation. Responsible for the synthesis of complex-type N-linked oligosaccharides in many glycoproteins as well as the carbohydrate moieties of glycolipids. Can produce lactose. This is Beta-1,4-galactosyltransferase 2 from Homo sapiens (Human).